The sequence spans 143 residues: Ribosome-binding factor A (143 aa).

Positions 116–128 are enriched in basic and acidic residues; it reads SDDEAKQKQHGDQ. Residues 116 to 143 form a disordered region; the sequence is SDDEAKQKQHGDQQDVSQSSDDKSEGED.

Belongs to the RbfA family. In terms of assembly, monomer. Binds 30S ribosomal subunits, but not 50S ribosomal subunits or 70S ribosomes.

The protein resides in the cytoplasm. One of several proteins that assist in the late maturation steps of the functional core of the 30S ribosomal subunit. Associates with free 30S ribosomal subunits (but not with 30S subunits that are part of 70S ribosomes or polysomes). Required for efficient processing of 16S rRNA. May interact with the 5'-terminal helix region of 16S rRNA. The protein is Ribosome-binding factor A of Shewanella sediminis (strain HAW-EB3).